The sequence spans 1029 residues: 2-oxoglutarate dehydrogenase, mitochondrial (1029 aa).

Thiamine diphosphate is bound by residues Arg317, Asp415, Asn448, Ile450, and Gln676. Residues Asp415, Asn448, and Ile450 each contribute to the Mg(2+) site.

Belongs to the alpha-ketoglutarate dehydrogenase family. In terms of assembly, homodimer. Component of the 2-oxoglutarate dehydrogenase complex. Thiamine diphosphate is required as a cofactor. The cofactor is Mg(2+).

It is found in the mitochondrion matrix. The enzyme catalyses N(6)-[(R)-lipoyl]-L-lysyl-[protein] + 2-oxoglutarate + H(+) = N(6)-[(R)-S(8)-succinyldihydrolipoyl]-L-lysyl-[protein] + CO2. The 2-oxoglutarate dehydrogenase complex catalyzes the overall conversion of 2-oxoglutarate to succinyl-CoA and CO(2). It contains multiple copies of three enzymatic components: 2-oxoglutarate dehydrogenase (E1), dihydrolipoamide succinyltransferase (E2) and lipoamide dehydrogenase (E3). In Caenorhabditis elegans, this protein is 2-oxoglutarate dehydrogenase, mitochondrial (ogdh-1).